The chain runs to 1066 residues: Kinesin-like protein Klp61F (1066 aa).

The Kinesin motor domain maps to Asn-19–Ile-356. Gly-103–Thr-110 contacts ATP. Positions Val-362–Lys-462 form a coiled coil. At Thr-520 the chain carries Phosphothreonine. Coiled-coil stretches lie at residues Asp-540–Gln-569, Leu-639–Asn-738, Cys-808–Glu-875, and Asp-889–Arg-918. Thr-933 carries the phosphothreonine modification. Residue Ser-949 is modified to Phosphoserine. A compositionally biased stretch (polar residues) spans Glu-990–Pro-1002. Disordered regions lie at residues Glu-990–Val-1009 and Gly-1016–Ala-1066. The segment covering Gly-1033–Pro-1051 has biased composition (low complexity). Residue Ser-1043 is modified to Phosphoserine. Phosphothreonine is present on Thr-1045. Phosphoserine is present on residues Ser-1050 and Ser-1054.

Belongs to the TRAFAC class myosin-kinesin ATPase superfamily. Kinesin family. BimC subfamily. Homotetramer. Consists of two pairs of polypeptides associated by coiled-coil interactions to form two homodimers. The homodimers are linked by lateral interactions between their coiled-coil regions to form a bipolar homotetramer consisting of a central rod with two motor domains projecting from either end. Parallel coiled coils extend from each pair of motor heads, switch to two antiparallel coiled coils in the central region and then back to parallel coiled coils. Interacts with Wee1. Post-translationally, phosphorylation is required for localization to mitotic spindles. Phosphorylation of Thr-933 during mitosis controls association with the spindle apparatus. Phosphorylated in vitro by Wee1.

It localises to the cytoplasm. It is found in the cytoskeleton. Its subcellular location is the spindle. The protein resides in the spindle pole. Functionally, important role in mitotic dividing cells. Microtubule motor required for spindle body separation. Slow plus-end directed microtubule motor capable of cross-linking and sliding apart antiparallel microtubules, thereby pushing apart the associated spindle poles during spindle assembly and function. Forms cross-links between microtubules within interpolar microtubule bundles. Contributes to the length of the metaphase spindle, maintains the prometaphase spindle by antagonizing Ncd, drives anaphase B, and also contributes to normal chromosome congression, kinetochore spacing, and anaphase A rates. Displays microtubule-stimulated ATPase activity. Required for normal fusome organization. Required in non-mitotic cells for transport of secretory proteins from the Golgi complex to the cell surface. In Drosophila melanogaster (Fruit fly), this protein is Kinesin-like protein Klp61F.